The primary structure comprises 581 residues: MLIKSEYKPRMLPKEEQVKKPMTSNGRISFVLMAIAVLFAGLIARGLYLQTVTYNFLKEQGDNRIVRTQTLPATRGTVSDRNGAVLALSAPTESLFAVPKEMKEMPSAAQLERLSELVDVPVDVLRNKLEQKGKSFIWIKRQLDPKVAEEVKALGLENFVFEKELKRHYPMGNLFAHVIGFTDIDGKGQEGLELSLEDSLHGEDGAEVVLRDRQGNIVDSLDSPRNKAPKNGKDIILSLDQRIQTLAYEELNKAVEYHQAKAGTVVVLDARTGEILALANTPAYDPNRPGRADSEQRRNRAVTDMIEPGSAIKPFVIAKALDAGKTDLNERLNTQPYKIGPSPVRDTHVYPSLDVRGIMQKSSNVGTSKLSARFGAEEMYDFYHELGIGVRMHSGFPGETAGLLRNWRRWRPIEQATMSFGYGLQLSLLQLARAYTALTHDGVLLPVSFEKQAVAPQGKRIFKESTAREVRNLMVSVTEPGGTGTAGAVDGFDVGAKTGTARKFVNGRYADNKHIATFIGFAPAKNPRVIVAVTIDEPTAHGYYGGVVAGPPFKKIMGGSLNILGISPTKPLTAAAVKTPS.

Residues 28–48 (ISFVLMAIAVLFAGLIARGLY) traverse the membrane as a helical segment. S310 serves as the catalytic Acyl-ester intermediate.

It belongs to the transpeptidase family. FtsI subfamily.

It localises to the cell inner membrane. It carries out the reaction Preferential cleavage: (Ac)2-L-Lys-D-Ala-|-D-Ala. Also transpeptidation of peptidyl-alanyl moieties that are N-acyl substituents of D-alanine.. It participates in cell wall biogenesis; peptidoglycan biosynthesis. Functionally, catalyzes cross-linking of the peptidoglycan cell wall at the division septum. This chain is Probable peptidoglycan D,D-transpeptidase PenA, found in Neisseria meningitidis serogroup A / serotype 4A (strain DSM 15465 / Z2491).